A 202-amino-acid polypeptide reads, in one-letter code: Imidazoleglycerol-phosphate dehydratase (202 aa).

The protein belongs to the imidazoleglycerol-phosphate dehydratase family.

It localises to the cytoplasm. The enzyme catalyses D-erythro-1-(imidazol-4-yl)glycerol 3-phosphate = 3-(imidazol-4-yl)-2-oxopropyl phosphate + H2O. The protein operates within amino-acid biosynthesis; L-histidine biosynthesis; L-histidine from 5-phospho-alpha-D-ribose 1-diphosphate: step 6/9. In Rhizobium johnstonii (strain DSM 114642 / LMG 32736 / 3841) (Rhizobium leguminosarum bv. viciae), this protein is Imidazoleglycerol-phosphate dehydratase.